The chain runs to 195 residues: Probable nicotinate-nucleotide adenylyltransferase (195 aa).

This sequence belongs to the NadD family.

The enzyme catalyses nicotinate beta-D-ribonucleotide + ATP + H(+) = deamido-NAD(+) + diphosphate. Its pathway is cofactor biosynthesis; NAD(+) biosynthesis; deamido-NAD(+) from nicotinate D-ribonucleotide: step 1/1. Its function is as follows. Catalyzes the reversible adenylation of nicotinate mononucleotide (NaMN) to nicotinic acid adenine dinucleotide (NaAD). The polypeptide is Probable nicotinate-nucleotide adenylyltransferase (Chlorobaculum parvum (strain DSM 263 / NCIMB 8327) (Chlorobium vibrioforme subsp. thiosulfatophilum)).